Here is a 36-residue protein sequence, read N- to C-terminus: Photosystem I reaction center subunit VIII (36 aa).

Residues 9 to 29 (ILVPLVGLVFPAVTMASLFLY) traverse the membrane as a helical segment.

Belongs to the PsaI family.

The protein localises to the plastid. The protein resides in the chloroplast thylakoid membrane. Functionally, may help in the organization of the PsaL subunit. This Staurastrum punctulatum (Green alga) protein is Photosystem I reaction center subunit VIII.